The sequence spans 207 residues: Small ribosomal subunit protein uS4 (207 aa).

Positions 26-53 are disordered; it reads KPFDVKTKKHAKAPGQHGQARGKQSEYS. Residues 97 to 159 enclose the S4 RNA-binding domain; sequence SRLDNVVYRM…AKQQLRIKNA (63 aa).

The protein belongs to the universal ribosomal protein uS4 family. Part of the 30S ribosomal subunit. Contacts protein S5. The interaction surface between S4 and S5 is involved in control of translational fidelity.

Functionally, one of the primary rRNA binding proteins, it binds directly to 16S rRNA where it nucleates assembly of the body of the 30S subunit. Its function is as follows. With S5 and S12 plays an important role in translational accuracy. This chain is Small ribosomal subunit protein uS4, found in Acinetobacter baylyi (strain ATCC 33305 / BD413 / ADP1).